The following is a 271-amino-acid chain: Tryptophan synthase alpha chain (271 aa).

Catalysis depends on proton acceptor residues E59 and D70.

It belongs to the TrpA family. In terms of assembly, tetramer of two alpha and two beta chains.

The catalysed reaction is (1S,2R)-1-C-(indol-3-yl)glycerol 3-phosphate + L-serine = D-glyceraldehyde 3-phosphate + L-tryptophan + H2O. The protein operates within amino-acid biosynthesis; L-tryptophan biosynthesis; L-tryptophan from chorismate: step 5/5. Functionally, the alpha subunit is responsible for the aldol cleavage of indoleglycerol phosphate to indole and glyceraldehyde 3-phosphate. In Methanosarcina mazei (strain ATCC BAA-159 / DSM 3647 / Goe1 / Go1 / JCM 11833 / OCM 88) (Methanosarcina frisia), this protein is Tryptophan synthase alpha chain.